We begin with the raw amino-acid sequence, 250 residues long: Probable transcriptional regulatory protein Ctha_1786 (250 aa).

Belongs to the TACO1 family.

The protein localises to the cytoplasm. The polypeptide is Probable transcriptional regulatory protein Ctha_1786 (Chloroherpeton thalassium (strain ATCC 35110 / GB-78)).